Consider the following 433-residue polypeptide: Xylose isomerase (433 aa).

Mg(2+)-binding residues include Asp305 and Asp307.

It belongs to the xylose isomerase family. In terms of assembly, homotetramer. Requires Mg(2+) as cofactor.

It localises to the cytoplasm. It carries out the reaction alpha-D-xylose = alpha-D-xylulofuranose. The chain is Xylose isomerase from Cereibacter sphaeroides (strain KD131 / KCTC 12085) (Rhodobacter sphaeroides).